The following is a 330-amino-acid chain: Putative glycosyltransferase ORF330 (330 aa).

It belongs to the glycosyltransferase group 1 family. Glycosyltransferase 4 subfamily.

The polypeptide is Putative glycosyltransferase ORF330 (Acidianus filamentous virus 2 (isolate Italy/Pozzuoli) (AFV-2)).